The sequence spans 392 residues: Formate-dependent phosphoribosylglycinamide formyltransferase (392 aa).

N(1)-(5-phospho-beta-D-ribosyl)glycinamide-binding positions include 22-23 (EL) and glutamate 82. ATP-binding positions include arginine 114, lysine 155, 160 to 165 (SSGKGQ), 195 to 198 (EGVV), and glutamate 203. The ATP-grasp domain maps to 119-308 (RLAAEELGLP…EFALHVRAFL (190 aa)). Mg(2+) is bound by residues glutamate 267 and glutamate 279. Residues aspartate 286, lysine 355, and 362–363 (RR) each bind N(1)-(5-phospho-beta-D-ribosyl)glycinamide.

It belongs to the PurK/PurT family. Homodimer.

It carries out the reaction N(1)-(5-phospho-beta-D-ribosyl)glycinamide + formate + ATP = N(2)-formyl-N(1)-(5-phospho-beta-D-ribosyl)glycinamide + ADP + phosphate + H(+). The protein operates within purine metabolism; IMP biosynthesis via de novo pathway; N(2)-formyl-N(1)-(5-phospho-D-ribosyl)glycinamide from N(1)-(5-phospho-D-ribosyl)glycinamide (formate route): step 1/1. Involved in the de novo purine biosynthesis. Catalyzes the transfer of formate to 5-phospho-ribosyl-glycinamide (GAR), producing 5-phospho-ribosyl-N-formylglycinamide (FGAR). Formate is provided by PurU via hydrolysis of 10-formyl-tetrahydrofolate. The chain is Formate-dependent phosphoribosylglycinamide formyltransferase from Cronobacter sakazakii (strain ATCC BAA-894) (Enterobacter sakazakii).